A 296-amino-acid polypeptide reads, in one-letter code: Morphine 6-dehydrogenase (296 aa).

13-22 (GVKMPALGLG) lines the NADP(+) pocket. Catalysis depends on tyrosine 52, which acts as the Proton donor. Histidine 110 is a substrate binding site.

This sequence belongs to the aldo/keto reductase family. In terms of assembly, monomer.

The catalysed reaction is morphine + NAD(+) = morphinone + NADH + H(+). The enzyme catalyses morphine + NADP(+) = morphinone + NADPH + H(+). Its pathway is alkaloid degradation; codeine degradation. It participates in alkaloid degradation; morphine degradation. Its function is as follows. Oxidizes only the C-6 hydroxy group of morphine and codeine. The polypeptide is Morphine 6-dehydrogenase (morA) (Pseudomonas putida (Arthrobacter siderocapsulatus)).